The following is a 123-amino-acid chain: Ribosome-binding factor A (123 aa).

Belongs to the RbfA family. As to quaternary structure, monomer. Binds 30S ribosomal subunits, but not 50S ribosomal subunits or 70S ribosomes.

It is found in the cytoplasm. In terms of biological role, one of several proteins that assist in the late maturation steps of the functional core of the 30S ribosomal subunit. Associates with free 30S ribosomal subunits (but not with 30S subunits that are part of 70S ribosomes or polysomes). Required for efficient processing of 16S rRNA. May interact with the 5'-terminal helix region of 16S rRNA. The sequence is that of Ribosome-binding factor A from Variovorax paradoxus (strain S110).